Reading from the N-terminus, the 105-residue chain is Integration host factor (105 aa).

The H2TH motif, binds DNA motif lies at 64 to 71 (LPKVGKVK). A lid, binds DNA region spans residues 82-94 (APTRRLRGLGDRQ).

The protein belongs to the actinobacterial IHF (aIHF) family. In terms of assembly, homodimer in solution. Binds DNA as a monomer.

Its subcellular location is the cytoplasm. Functionally, a nucleoid-associated protein (NAP) required for septum formation and normal cell division as well as for DNA segregation. Binds about 135 sites across the chromosome, most of which are genes involved in virulence; most DNA-binding sites are immediately upstream of transcription start sites. When mIHF is depleted most of the genes are down-regulated. Binds supercoiled and linear dsDNA in a concentration-dependent manner, probably non-sequence specifically. Binding compacts DNA, protecting it from degradation. Initial binding to supercoiled DNA opens it fully, followed by bending and compaction. Bends and thus compacts linear DNA. Binds DNA via 2 sites, forms left-handed loops on linear DNA; at low concentrations unwinds larger cosmids (42.6 kb) then collapses and condenses DNA as protein levels rise. Forms mostly left-handed loops on condensing cosmid DNA. The chain is Integration host factor from Mycobacterium tuberculosis (strain ATCC 25618 / H37Rv).